The chain runs to 166 residues: Cyclic pyranopterin monophosphate synthase (166 aa).

Substrate-binding positions include 75 to 77 and 113 to 114; these read LCH and ME. D128 is a catalytic residue.

This sequence belongs to the MoaC family. In terms of assembly, homohexamer; trimer of dimers.

It catalyses the reaction (8S)-3',8-cyclo-7,8-dihydroguanosine 5'-triphosphate = cyclic pyranopterin phosphate + diphosphate. The protein operates within cofactor biosynthesis; molybdopterin biosynthesis. In terms of biological role, catalyzes the conversion of (8S)-3',8-cyclo-7,8-dihydroguanosine 5'-triphosphate to cyclic pyranopterin monophosphate (cPMP). The polypeptide is Cyclic pyranopterin monophosphate synthase (Thermomicrobium roseum (strain ATCC 27502 / DSM 5159 / P-2)).